Reading from the N-terminus, the 156-residue chain is Phosphopantetheine adenylyltransferase (156 aa).

Belongs to the eukaryotic CoaD family.

The protein localises to the cytoplasm. It carries out the reaction (R)-4'-phosphopantetheine + ATP + H(+) = 3'-dephospho-CoA + diphosphate. The protein operates within cofactor biosynthesis; coenzyme A biosynthesis. Reversibly transfers an adenylyl group from ATP to 4'-phosphopantetheine, yielding dephospho-CoA (dPCoA) and pyrophosphate. This chain is Phosphopantetheine adenylyltransferase, found in Methanosarcina acetivorans (strain ATCC 35395 / DSM 2834 / JCM 12185 / C2A).